Reading from the N-terminus, the 273-residue chain is Phosphate import ATP-binding protein PstB (273 aa).

Residues 19–258 (ISIQNVTISY…FNETEKIFNS (240 aa)) form the ABC transporter domain. 51–58 (GPSGCGKS) contributes to the ATP binding site.

Belongs to the ABC transporter superfamily. Phosphate importer (TC 3.A.1.7) family. In terms of assembly, the complex is composed of two ATP-binding proteins (PstB), two transmembrane proteins (PstC and PstA) and a solute-binding protein (PstS).

Its subcellular location is the cell inner membrane. The catalysed reaction is phosphate(out) + ATP + H2O = ADP + 2 phosphate(in) + H(+). Its function is as follows. Part of the ABC transporter complex PstSACB involved in phosphate import. Responsible for energy coupling to the transport system. This Parasynechococcus marenigrum (strain WH8102) protein is Phosphate import ATP-binding protein PstB.